Reading from the N-terminus, the 556-residue chain is Vacuolar protein 8 (556 aa).

Residue G2 is the site of N-myristoyl glycine attachment. 3 S-palmitoyl cysteine lipidation sites follow: C4, C5, and C7. ARM repeat units lie at residues 38–74 (NRSE…AFAE), 75–115 (VTEK…NLAV), 117–156 (DSNK…NLAT), 158–197 (DQNK…NMTH), 199–238 (LENR…NIAV), 242–281 (NRKK…NLAS), 283–322 (ANYQ…NISI), 324–364 (PLNE…NLAA), and 408–447 (DDLK…NLCS).

Belongs to the beta-catenin family.

Its subcellular location is the vacuole membrane. Functions in both vacuole inheritance and protein targeting from the cytoplasm to vacuole. The sequence is that of Vacuolar protein 8 (VAC8) from Komagataella pastoris (Yeast).